The sequence spans 340 residues: NADH-quinone oxidoreductase subunit H (340 aa).

9 helical membrane passes run 3-23 (LVGMVALMVGVLVSVAYLVYM), 69-89 (WAFFAAPVITFALALAGWAVI), 102-122 (VVVMPYVVADLNLGVLYVLAI), 127-147 (VYGIIMAGWASGSNYAFLGAI), 154-174 (ISYEMSMGLVMLSVSLCAGSL), 186-206 (MPYWMDLLLLPMAGVFFVSML), 248-268 (ILVSAMMVVLFLGGWYPPLNI), 274-294 (IPGFVWFCSKVFLLLFCFIWV), and 312-332 (KVFLPFSFVWVMVISGVLLWV).

It belongs to the complex I subunit 1 family. In terms of assembly, NDH-1 is composed of 14 different subunits. Subunits NuoA, H, J, K, L, M, N constitute the membrane sector of the complex.

The protein localises to the cell inner membrane. The enzyme catalyses a quinone + NADH + 5 H(+)(in) = a quinol + NAD(+) + 4 H(+)(out). In terms of biological role, NDH-1 shuttles electrons from NADH, via FMN and iron-sulfur (Fe-S) centers, to quinones in the respiratory chain. The immediate electron acceptor for the enzyme in this species is believed to be ubiquinone. Couples the redox reaction to proton translocation (for every two electrons transferred, four hydrogen ions are translocated across the cytoplasmic membrane), and thus conserves the redox energy in a proton gradient. This subunit may bind ubiquinone. The chain is NADH-quinone oxidoreductase subunit H from Anaplasma phagocytophilum (strain HZ).